Here is a 274-residue protein sequence, read N- to C-terminus: Bis(5'-nucleosyl)-tetraphosphatase, symmetrical (274 aa).

It belongs to the Ap4A hydrolase family.

It catalyses the reaction P(1),P(4)-bis(5'-adenosyl) tetraphosphate + H2O = 2 ADP + 2 H(+). Hydrolyzes diadenosine 5',5'''-P1,P4-tetraphosphate to yield ADP. This is Bis(5'-nucleosyl)-tetraphosphatase, symmetrical from Shewanella sediminis (strain HAW-EB3).